Here is an 810-residue protein sequence, read N- to C-terminus: LPS-assembly protein LptD (810 aa).

The N-terminal stretch at 1–29 is a signal peptide; the sequence is MTKRTLGYSYPIALTISLVPALTPAIVQA.

The protein belongs to the LptD family. In terms of assembly, component of the lipopolysaccharide transport and assembly complex. Interacts with LptE and LptA.

It is found in the cell outer membrane. Together with LptE, is involved in the assembly of lipopolysaccharide (LPS) at the surface of the outer membrane. This Aeromonas hydrophila subsp. hydrophila (strain ATCC 7966 / DSM 30187 / BCRC 13018 / CCUG 14551 / JCM 1027 / KCTC 2358 / NCIMB 9240 / NCTC 8049) protein is LPS-assembly protein LptD.